We begin with the raw amino-acid sequence, 649 residues long: tRNA-guanine(15) transglycosylase (649 aa).

The active-site Nucleophile is D88. Substrate is bound by residues D123 and A194. Residues C280, C282, and C285 each coordinate Zn(2+). The 76-residue stretch at 573 to 648 (KYRIVIDSSV…VAATLRGGLK (76 aa)) folds into the PUA domain.

It belongs to the archaeosine tRNA-ribosyltransferase family. Requires Zn(2+) as cofactor.

It carries out the reaction guanosine(15) in tRNA + 7-cyano-7-deazaguanine = 7-cyano-7-carbaguanosine(15) in tRNA + guanine. Its pathway is tRNA modification; archaeosine-tRNA biosynthesis. In terms of biological role, exchanges the guanine residue with 7-cyano-7-deazaguanine (preQ0) at position 15 in the dihydrouridine loop (D-loop) of archaeal tRNAs. This is tRNA-guanine(15) transglycosylase from Methanococcus maripaludis (strain DSM 14266 / JCM 13030 / NBRC 101832 / S2 / LL).